The sequence spans 292 residues: Probable ABC transporter permease protein PH1215 (292 aa).

Transmembrane regions (helical) follow at residues I10–V30, L72–L92, I106–Y126, I160–I180, L215–L235, and F261–P281. The region spanning L68–Y284 is the ABC transmembrane type-1 domain.

This sequence belongs to the binding-protein-dependent transport system permease family. MalFG subfamily.

The protein resides in the cell membrane. Functionally, probably part of a binding-protein-dependent transport system PH1214/15/16. Probably responsible for the translocation of the substrate across the membrane. In Pyrococcus horikoshii (strain ATCC 700860 / DSM 12428 / JCM 9974 / NBRC 100139 / OT-3), this protein is Probable ABC transporter permease protein PH1215.